The following is a 527-amino-acid chain: Amine oxidase [flavin-containing] A (527 aa).

Methionine 1 is modified (N-acetylmethionine). Over 1-497 the chain is Cytoplasmic; sequence MESLQKTSDA…PSFWERNLPS (497 aa). Serine 383 carries the phosphoserine modification. An S-8alpha-FAD cysteine modification is found at cysteine 406. The chain crosses the membrane as a helical; Anchor for type IV membrane protein span at residues 498 to 518; it reads VSGLLKIVGFSTSITALWFVM. Over 519–527 the chain is Mitochondrial intermembrane; it reads YRFRLLSRS. Residues 520-522 form an interaction with membrane phospholipid headgroups region; it reads RFR.

It belongs to the flavin monoamine oxidase family. In terms of assembly, monomer, homo- or heterodimer (containing two subunits of similar size). Each subunit contains a covalently bound flavin. Enzymatically active as monomer. The cofactor is FAD.

It is found in the mitochondrion outer membrane. It carries out the reaction a secondary aliphatic amine + O2 + H2O = a primary amine + an aldehyde + H2O2. The catalysed reaction is a primary methyl amine + O2 + H2O = an aldehyde + H2O2 + NH4(+). The enzyme catalyses (R)-adrenaline + O2 + H2O = (R)-3,4-dihydroxymandelaldehyde + methylamine + H2O2. It catalyses the reaction dopamine + O2 + H2O = 3,4-dihydroxyphenylacetaldehyde + H2O2 + NH4(+). It carries out the reaction tyramine + O2 + H2O = (4-hydroxyphenyl)acetaldehyde + H2O2 + NH4(+). The catalysed reaction is (R)-noradrenaline + O2 + H2O = (R)-3,4-dihydroxymandelaldehyde + H2O2 + NH4(+). The enzyme catalyses serotonin + O2 + H2O = (5-hydroxyindol-3-yl)acetaldehyde + H2O2 + NH4(+). It catalyses the reaction kynuramine + O2 + H2O = 3-(2-aminophenyl)-3-oxopropanal + H2O2 + NH4(+). It carries out the reaction tryptamine + O2 + H2O = indole-3-acetaldehyde + H2O2 + NH4(+). The catalysed reaction is 2-phenylethylamine + O2 + H2O = 2-phenylacetaldehyde + H2O2 + NH4(+). Catalyzes the oxidative deamination of primary and some secondary amine such as neurotransmitters, with concomitant reduction of oxygen to hydrogen peroxide and has important functions in the metabolism of neuroactive and vasoactive amines in the central nervous system and peripheral tissues. Preferentially oxidizes serotonin. Also catalyzes the oxidative deamination of kynuramine to 3-(2-aminophenyl)-3-oxopropanal that can spontaneously condense to 4-hydroxyquinoline. This chain is Amine oxidase [flavin-containing] A, found in Bos taurus (Bovine).